Consider the following 159-residue polypeptide: Capsid protein (159 aa).

At Ser-2 the chain carries N-acetylserine; by host.

The protein belongs to the virgaviridae capsid protein family.

It is found in the virion. In terms of biological role, capsid protein self-assembles to form rod-shaped virions about 18 nm in diameter with a central canal enclosing the viral genomic RNA. The sequence is that of Capsid protein (CP) from Tobacco mosaic virus (strain Rakkyo) (TMV-R).